A 311-amino-acid chain; its full sequence is MQSKNMIVASSHQQQQQQQPQQPQPQLKCPRCDSSNTKFCYYNNYSLSQPRHFCKACKRYWTRGGTLRNVPVGGSYRKNKRVKRPSTATTTTASTVSTTNSSSPNNPHQISHFSSMNHHPLFYGLSDHMSSCNNNLPMIPSRFSDSSKTCSSSGLESEFLSSGFSSLSALGLGLPHQMSHDHTINGSFINNSTTNKPFLLSGLFGSSMSSSSTLLQHPHKPMNNGGDMLGQSHLQTLASLQDLHVGGNNEDMKYKEGKLDQISGNINGFMSSSSSLDPSNYNNMWNNASVVNGAWLDPTNNNVGSSLTSLI.

Residues 1–12 (MQSKNMIVASSH) are compositionally biased toward polar residues. Positions 1–29 (MQSKNMIVASSHQQQQQQQPQQPQPQLKC) are disordered. The span at 13-26 (QQQQQQQPQQPQPQ) shows a compositional bias: low complexity. Residues 27–81 (LKCPRCDSSNTKFCYYNNYSLSQPRHFCKACKRYWTRGGTLRNVPVGGSYRKNKR) form a Dof-type zinc finger. Residues C29, C32, C54, and C57 each coordinate Zn(2+). Positions 72–110 (VGGSYRKNKRVKRPSTATTTTASTVSTTNSSSPNNPHQI) are disordered. A compositionally biased stretch (low complexity) spans 85-107 (PSTATTTTASTVSTTNSSSPNNP).

The protein localises to the nucleus. In terms of biological role, transcription factor that binds specifically to a 5'-AA[AG]G-3' consensus core sequence. This chain is Dof zinc finger protein DOF1.4 (DOF1.4), found in Arabidopsis thaliana (Mouse-ear cress).